Reading from the N-terminus, the 223-residue chain is Killer cell lectin-like receptor subfamily B member 1B allele B (223 aa).

Over Met-1–Cys-45 the chain is Cytoplasmic. Positions Val-5–Leu-10 match the ITIM motif motif. The LCK-binding motif signature appears at Cys-31–Pro-34. A helical; Signal-anchor for type II membrane protein transmembrane segment spans residues Ala-46–Leu-66. Over Gln-67–Ser-223 the chain is Extracellular. The C-type lectin domain occupies His-101–Gln-211. Cystine bridges form between Cys-122/Cys-210 and Cys-189/Cys-202.

In terms of assembly, homodimer; disulfide-linked. Interacts with tyrosine kinase LCK. Binds PTPN6/SHP-1 in a phosphorylation-dependent manner. In terms of tissue distribution, expressed in a subset of natural killer cells.

It is found in the membrane. Functionally, receptor for CLEC2D/OCIL. Ligand-binding contributes to inhibition of cytotoxic natural killer (NK) cells. May mediate MHC class I-independent 'missing-self' recognition of allografts, tumor cells and virus-infected cells. This Rattus norvegicus (Rat) protein is Killer cell lectin-like receptor subfamily B member 1B allele B.